Reading from the N-terminus, the 244-residue chain is Thiol S-methyltransferase TMT1B (244 aa).

The N-terminal stretch at Met-1–Ala-23 is a signal peptide.

Belongs to the methyltransferase superfamily.

The protein localises to the endoplasmic reticulum membrane. The protein resides in the lipid droplet. Its subcellular location is the microsome. It is found in the cytoplasm. It localises to the cytosol. It catalyses the reaction a thiol + S-adenosyl-L-methionine = a methyl thioether + S-adenosyl-L-homocysteine + H(+). Its function is as follows. Thiol S-methyltransferase that catalyzes the transfer of a methyl group from S-adenosyl-L-methionine to alkyl and phenolic thiol-containing acceptor substrates. Together with TMT1B accounts for most of S-thiol methylation activity in the endoplasmic reticulum of hepatocytes. Selectively methylates S-centered nucleophiles from metabolites such as hydrogen sulfide and dithiothreitol. In Mus musculus (Mouse), this protein is Thiol S-methyltransferase TMT1B.